The sequence spans 496 residues: Glutamyl-tRNA(Gln) amidotransferase subunit A (496 aa).

Catalysis depends on charge relay system residues Lys-75 and Ser-150. The active-site Acyl-ester intermediate is the Ser-174.

It belongs to the amidase family. GatA subfamily. In terms of assembly, heterotrimer of A, B and C subunits.

It carries out the reaction L-glutamyl-tRNA(Gln) + L-glutamine + ATP + H2O = L-glutaminyl-tRNA(Gln) + L-glutamate + ADP + phosphate + H(+). In terms of biological role, allows the formation of correctly charged Gln-tRNA(Gln) through the transamidation of misacylated Glu-tRNA(Gln) in organisms which lack glutaminyl-tRNA synthetase. The reaction takes place in the presence of glutamine and ATP through an activated gamma-phospho-Glu-tRNA(Gln). The protein is Glutamyl-tRNA(Gln) amidotransferase subunit A of Burkholderia ambifaria (strain MC40-6).